The sequence spans 235 residues: Phosphoribosylaminoimidazole-succinocarboxamide synthase (235 aa).

The protein belongs to the SAICAR synthetase family.

The enzyme catalyses 5-amino-1-(5-phospho-D-ribosyl)imidazole-4-carboxylate + L-aspartate + ATP = (2S)-2-[5-amino-1-(5-phospho-beta-D-ribosyl)imidazole-4-carboxamido]succinate + ADP + phosphate + 2 H(+). Its pathway is purine metabolism; IMP biosynthesis via de novo pathway; 5-amino-1-(5-phospho-D-ribosyl)imidazole-4-carboxamide from 5-amino-1-(5-phospho-D-ribosyl)imidazole-4-carboxylate: step 1/2. This chain is Phosphoribosylaminoimidazole-succinocarboxamide synthase, found in Thermoanaerobacter pseudethanolicus (strain ATCC 33223 / 39E) (Clostridium thermohydrosulfuricum).